The chain runs to 517 residues: Bifunctional purine biosynthesis protein PurH (517 aa).

Residues 1 to 145 enclose the MGS-like domain; that stretch reads MSPLALVSVS…KNHKDVSVLV (145 aa).

The protein belongs to the PurH family.

It carries out the reaction (6R)-10-formyltetrahydrofolate + 5-amino-1-(5-phospho-beta-D-ribosyl)imidazole-4-carboxamide = 5-formamido-1-(5-phospho-D-ribosyl)imidazole-4-carboxamide + (6S)-5,6,7,8-tetrahydrofolate. The catalysed reaction is IMP + H2O = 5-formamido-1-(5-phospho-D-ribosyl)imidazole-4-carboxamide. It participates in purine metabolism; IMP biosynthesis via de novo pathway; 5-formamido-1-(5-phospho-D-ribosyl)imidazole-4-carboxamide from 5-amino-1-(5-phospho-D-ribosyl)imidazole-4-carboxamide (10-formyl THF route): step 1/1. Its pathway is purine metabolism; IMP biosynthesis via de novo pathway; IMP from 5-formamido-1-(5-phospho-D-ribosyl)imidazole-4-carboxamide: step 1/1. The protein is Bifunctional purine biosynthesis protein PurH of Prochlorococcus marinus (strain MIT 9312).